The following is a 1682-amino-acid chain: Calmodulin-binding transcription activator 1 (1682 aa).

The CG-1 DNA-binding region spans 63–188 (KCSSLPKERH…YLNVPAIEDC (126 aa)). Positions 112-119 (RKKVKYRK) match the Nuclear localization signal motif. 2 disordered regions span residues 284 to 375 (RIIS…MVDS) and 599 to 622 (SSFSQTGHSPHIHQTPSPSFFLQD). Basic and acidic residues predominate over residues 302-327 (EVQHNDVSEGKHEPSHGRSTSREKRN). Composition is skewed to polar residues over residues 337–367 (HQNSTEVSSTNQVEVPDTTQSSPVSISSGLN) and 599–618 (SSFSQTGHSPHIHQTPSPSF). In terms of domain architecture, IPT/TIG spans 877-955 (DYSPEWSYPE…ISNSVVFEYK (79 aa)). The tract at residues 992–1020 (MAEMTGSQQHKQASGGGGSGSGSGSGAGG) is disordered. Residues 1005 to 1020 (SGGGGSGSGSGSGAGG) show a composition bias toward gly residues. 3 ANK repeats span residues 1066–1095 (RGMTLLHLAAAQGYATLIQTLIKWRTKHAD), 1111–1141 (FSCTPLMWACALGHLEAAVVLYKWDRRAISI), and 1145–1174 (LGRLPLGIARSRGHVKLAECLEHLQRDEQA). 2 disordered regions span residues 1217-1249 (ASTNPELRRPRSEPSNYYSTEGHKDYPAPKKHK) and 1267-1318 (LSLE…SASQ). Positions 1268–1291 (SLEQPNIRKQSPRSKQPSPETISP) are enriched in polar residues. The span at 1308–1318 (ETAASQASASQ) shows a compositional bias: low complexity. IQ domains follow at residues 1549–1585 (QEVAAAVIQRCYRKYKQLTWIALKYALYKKMTQAAIL), 1586–1608 (IQSKFRSYYEQKRFQQSRRAAVL), and 1609–1631 (IQNFYRSYKKCGRRRPARRTAVI).

This sequence belongs to the CAMTA family. In terms of assembly, may interact with calmodulin.

Its subcellular location is the nucleus. It is found in the cytoplasm. Functionally, transcriptional activator. The sequence is that of Calmodulin-binding transcription activator 1 from Mus musculus (Mouse).